Here is a 310-residue protein sequence, read N- to C-terminus: Ribonuclease HIII (310 aa).

The RNase H type-2 domain maps to Y91–K307. A divalent metal cation is bound by residues D97, E98, and D202.

This sequence belongs to the RNase HII family. RnhC subfamily. The cofactor is Mn(2+). It depends on Mg(2+) as a cofactor.

Its subcellular location is the cytoplasm. The enzyme catalyses Endonucleolytic cleavage to 5'-phosphomonoester.. Functionally, endonuclease that specifically degrades the RNA of RNA-DNA hybrids. The protein is Ribonuclease HIII of Staphylococcus haemolyticus (strain JCSC1435).